The sequence spans 702 residues: Elongation factor G 2 (702 aa).

The 283-residue stretch at 8 to 290 (ERYRNIGISA…AVIDYLPSPV (283 aa)) folds into the tr-type G domain. GTP-binding positions include 17 to 24 (AHIDAGKT), 88 to 92 (DTPGH), and 142 to 145 (NKMD).

This sequence belongs to the TRAFAC class translation factor GTPase superfamily. Classic translation factor GTPase family. EF-G/EF-2 subfamily.

It is found in the cytoplasm. In terms of biological role, catalyzes the GTP-dependent ribosomal translocation step during translation elongation. During this step, the ribosome changes from the pre-translocational (PRE) to the post-translocational (POST) state as the newly formed A-site-bound peptidyl-tRNA and P-site-bound deacylated tRNA move to the P and E sites, respectively. Catalyzes the coordinated movement of the two tRNA molecules, the mRNA and conformational changes in the ribosome. The polypeptide is Elongation factor G 2 (Cupriavidus metallidurans (strain ATCC 43123 / DSM 2839 / NBRC 102507 / CH34) (Ralstonia metallidurans)).